The primary structure comprises 624 residues: MKGQETRGFQSEVKQLLHLMIHSLYSNKEIFLRELISNASDAADKLRFRALSNPDLYEGDGELRVRVSFDKDKRTLTISDNGVGMTRDEVIDHLGTIAKSGTKSFLESLGSDQAKDSQLIGQFGVGFYSAFIVADKVTVRTRAAGEKPENGVFWESAGEGEYTVADITKEDRGTEITLHLREGEDEFLDDWRVRSIISKYSDHIALPVEIEKREEKDGETVISWEKINKAQALWTRNKSEITDEEYKEFYKHIAHDFNEPLTWSHNRVEGKQEYTSLLYIPSQAPWDMWNRDHKHGLKLYVQRVFIMDDAEQFMPNYLRFVRGLIDSSDLPLNVSREILQDSTVTRNLRNALTKRVLQMLEKLAKDDAEKYQTFWQQFGLVLKEGPAEDFANQEAIAKLLRFASTHTDSSAQTVSLEDYVSRMKEGQEKIYYITADSYAAAKSSPHLELLRKKGIEVLLLSDRIDEWMMNYLTEFDGKPFQSVSKVDESLEKLADEVDESAKEAEKALTPFIDRVKALLGERVKDVRLTHRLTDTPAIVSTDADEMSTQMAKLFAAAGQKVPEVKYIFELNPDHVLVKRAADTEDEAKFSEWVELLLDQALLAERGTLEDPNLFIRRMNQLLVS.

The a; substrate-binding stretch occupies residues 1 to 336 (MKGQETRGFQ…SSDLPLNVSR (336 aa)). Residues 337–552 (EILQDSTVTR…ADEMSTQMAK (216 aa)) form a b region. The tract at residues 553-624 (LFAAAGQKVP…IRRMNQLLVS (72 aa)) is c.

This sequence belongs to the heat shock protein 90 family. As to quaternary structure, homodimer.

It localises to the cytoplasm. Molecular chaperone. Has ATPase activity. The chain is Chaperone protein HtpG from Escherichia coli O1:K1 / APEC.